Consider the following 545-residue polypeptide: Probable protein kinase UbiB (545 aa).

In terms of domain architecture, Protein kinase spans 124-502; the sequence is DFDETPLASA…RRSQGLARFY (379 aa). ATP-binding positions include 130-138 and Lys-153; that span reads LASASIAQV. Residue Asp-288 is the Proton acceptor of the active site. The next 2 membrane-spanning stretches (helical) occupy residues 498 to 517 and 521 to 540; these read LARF…AILF and VETI…LLGW.

Belongs to the ABC1 family. UbiB subfamily.

The protein localises to the cell inner membrane. It functions in the pathway cofactor biosynthesis; ubiquinone biosynthesis [regulation]. Functionally, is probably a protein kinase regulator of UbiI activity which is involved in aerobic coenzyme Q (ubiquinone) biosynthesis. In Photobacterium profundum (strain SS9), this protein is Probable protein kinase UbiB.